A 192-amino-acid chain; its full sequence is 7-methyl-GTP pyrophosphatase (192 aa).

The Proton acceptor role is filled by Asp-70.

Belongs to the Maf family. YceF subfamily. A divalent metal cation is required as a cofactor.

Its subcellular location is the cytoplasm. It catalyses the reaction N(7)-methyl-GTP + H2O = N(7)-methyl-GMP + diphosphate + H(+). Its function is as follows. Nucleoside triphosphate pyrophosphatase that hydrolyzes 7-methyl-GTP (m(7)GTP). May have a dual role in cell division arrest and in preventing the incorporation of modified nucleotides into cellular nucleic acids. The sequence is that of 7-methyl-GTP pyrophosphatase from Xanthomonas campestris pv. campestris (strain 8004).